The sequence spans 295 residues: Small ribosomal subunit protein uS2 (295 aa).

The interval T247 to A295 is disordered.

The protein belongs to the universal ribosomal protein uS2 family.

This chain is Small ribosomal subunit protein uS2, found in Rickettsia conorii (strain ATCC VR-613 / Malish 7).